Here is a 463-residue protein sequence, read N- to C-terminus: MSTNQIILTDQGDNYVNVWSHVAQDLYNHYGETLYNSWFSKVNFIESSLNTVILCAPTNFVRDWIKSKYSMVILQLFQHYNNTIKSIEIITKELPGTTQTVTELPTKTFADIGSSELNSENIFSTLDVRFTFDNFVVGAPNELAYAAARAVAESSGAVSESNPLFLYGGVGLGKTHLMHAIGWYIKQHNPSRKVIYMSAEKFMYQFVKALRNKEVISFKEKFRSVDVLMIDDIQFICGKDSTQEEFFHTFNTLIDNNRQMVISCDRSPSDLDNIEDRIKSRLGWGLVADVHSTTYELRLGILESKIEQMNVKIPKDVIDFLASKIVSNVRELEGALNKVIAHSNFTLKEITLENTQNILRDLLRSNERIITVEDIQKKVASRYNIKLSDMSSSRRLREVARPRQIAMYLSKALTPKSLADIGKKFGKKDHTTVMHAIKKVEELLENDIELREEINLLMKILQN.

The segment at 1-83 (MSTNQIILTD…LQLFQHYNNT (83 aa)) is domain I, interacts with DnaA modulators. The segment at 83–124 (TIKSIEIITKELPGTTQTVTELPTKTFADIGSSELNSENIFS) is domain II. Positions 125 to 343 (TLDVRFTFDN…GALNKVIAHS (219 aa)) are domain III, AAA+ region. Residues glycine 171, glycine 173, lysine 174, and threonine 175 each contribute to the ATP site. The segment at 344 to 463 (NFTLKEITLE…INLLMKILQN (120 aa)) is domain IV, binds dsDNA.

Belongs to the DnaA family. Oligomerizes as a right-handed, spiral filament on DNA at oriC.

It localises to the cytoplasm. Functionally, plays an essential role in the initiation and regulation of chromosomal replication. ATP-DnaA binds to the origin of replication (oriC) to initiate formation of the DNA replication initiation complex once per cell cycle. Binds the DnaA box (a 9 base pair repeat at the origin) and separates the double-stranded (ds)DNA. Forms a right-handed helical filament on oriC DNA; dsDNA binds to the exterior of the filament while single-stranded (ss)DNA is stabiized in the filament's interior. The ATP-DnaA-oriC complex binds and stabilizes one strand of the AT-rich DNA unwinding element (DUE), permitting loading of DNA polymerase. After initiation quickly degrades to an ADP-DnaA complex that is not apt for DNA replication. Binds acidic phospholipids. In Rickettsia conorii (strain ATCC VR-613 / Malish 7), this protein is Chromosomal replication initiator protein DnaA.